The primary structure comprises 66 residues: COP-associated protein (66 aa).

Residues 1 to 66 form the HMA domain; sequence MKATFQVPSI…ALLDAGQEVV (66 aa). Cu cation-binding residues include cysteine 12 and cysteine 15. Cysteine 12 and cysteine 15 are disulfide-bonded.

Part of a cation-transporting system which is associated with copper export out of the H.pylori cells. The protein is COP-associated protein (copP) of Helicobacter pylori (strain ATCC 700392 / 26695) (Campylobacter pylori).